The primary structure comprises 398 residues: Isochorismate synthase DhbC (398 aa).

Position 271 is a phosphoserine (S271).

It belongs to the isochorismate synthase family.

It catalyses the reaction chorismate = isochorismate. The protein operates within siderophore biosynthesis; bacillibactin biosynthesis. The protein is Isochorismate synthase DhbC (dhbC) of Bacillus subtilis (strain 168).